The sequence spans 362 residues: Sulfate/thiosulfate import ATP-binding protein CysA (362 aa).

Residues 3–237 (IEIHDLSKQF…PANPFVYEFL (235 aa)) enclose the ABC transporter domain. 35–42 (GPSGSGKT) serves as a coordination point for ATP.

The protein belongs to the ABC transporter superfamily. Sulfate/tungstate importer (TC 3.A.1.6) family. The complex is composed of two ATP-binding proteins (CysA), two transmembrane proteins (CysT and CysW) and a solute-binding protein (CysP).

It is found in the cell inner membrane. It catalyses the reaction sulfate(out) + ATP + H2O = sulfate(in) + ADP + phosphate + H(+). The catalysed reaction is thiosulfate(out) + ATP + H2O = thiosulfate(in) + ADP + phosphate + H(+). Part of the ABC transporter complex CysAWTP involved in sulfate/thiosulfate import. Responsible for energy coupling to the transport system. This is Sulfate/thiosulfate import ATP-binding protein CysA from Nitrosomonas europaea (strain ATCC 19718 / CIP 103999 / KCTC 2705 / NBRC 14298).